Consider the following 510-residue polypeptide: NAD(P)H-quinone oxidoreductase subunit 2, chloroplastic (510 aa).

The next 13 membrane-spanning stretches (helical) occupy residues L24–L44, W59–W79, I99–I119, M124–C144, L149–Y169, Y183–G203, I229–F249, W295–I315, M323–D343, Y354–L374, A395–F415, L418–L438, and M484–I504.

The protein belongs to the complex I subunit 2 family. In terms of assembly, NDH is composed of at least 16 different subunits, 5 of which are encoded in the nucleus.

The protein resides in the plastid. It localises to the chloroplast thylakoid membrane. The enzyme catalyses a plastoquinone + NADH + (n+1) H(+)(in) = a plastoquinol + NAD(+) + n H(+)(out). It catalyses the reaction a plastoquinone + NADPH + (n+1) H(+)(in) = a plastoquinol + NADP(+) + n H(+)(out). In terms of biological role, NDH shuttles electrons from NAD(P)H:plastoquinone, via FMN and iron-sulfur (Fe-S) centers, to quinones in the photosynthetic chain and possibly in a chloroplast respiratory chain. The immediate electron acceptor for the enzyme in this species is believed to be plastoquinone. Couples the redox reaction to proton translocation, and thus conserves the redox energy in a proton gradient. This is NAD(P)H-quinone oxidoreductase subunit 2, chloroplastic from Sisyrinchium montanum (Strict blue-eyed grass).